A 418-amino-acid chain; its full sequence is Glutamyl-tRNA reductase (418 aa).

Substrate is bound by residues 49–52 (TCNR), Ser-109, 114–116 (EPQ), and Gln-120. Catalysis depends on Cys-50, which acts as the Nucleophile. Position 189–194 (189–194 (GAGETI)) interacts with NADP(+).

It belongs to the glutamyl-tRNA reductase family. As to quaternary structure, homodimer.

It catalyses the reaction (S)-4-amino-5-oxopentanoate + tRNA(Glu) + NADP(+) = L-glutamyl-tRNA(Glu) + NADPH + H(+). Its pathway is porphyrin-containing compound metabolism; protoporphyrin-IX biosynthesis; 5-aminolevulinate from L-glutamyl-tRNA(Glu): step 1/2. In terms of biological role, catalyzes the NADPH-dependent reduction of glutamyl-tRNA(Glu) to glutamate 1-semialdehyde (GSA). The sequence is that of Glutamyl-tRNA reductase from Klebsiella pneumoniae (strain 342).